A 658-amino-acid polypeptide reads, in one-letter code: Transport protein particle subunit trs85-1 (658 aa).

It belongs to the TRS85 family. As to quaternary structure, part of the multisubunit TRAPP (transport protein particle) complexes I and II.

It localises to the golgi apparatus. The protein localises to the cis-Golgi network. Component of the TRAPP I and TRAPP II complexes. TRAPP I plays a key role in the late stages of endoplasmic reticulum to Golgi traffic. TRAPP II seems to play a role in intra-Golgi transport. Has a role late in meiosis following DNA replication. The protein is Transport protein particle subunit trs85-1 (trs85-1) of Schizosaccharomyces pombe (strain 972 / ATCC 24843) (Fission yeast).